The chain runs to 71 residues: Plasticin-C1 (71 aa).

Positions 1–22 are cleaved as a signal peptide; sequence MAFLKKSLLLVLFLGLVSLSIC. Positions 23-45 are excised as a propeptide; the sequence is EEEKRENEDEEKQEDDDQSENKR. The disordered stretch occupies residues 25–46; the sequence is EKRENEDEEKQEDDDQSENKRG. Over residues 30–40 the composition is skewed to acidic residues; sequence EDEEKQEDDDQ. Asn-68 carries the asparagine amide modification. The propeptide occupies 70 to 71; the sequence is ES.

This sequence belongs to the frog skin active peptide (FSAP) family. Plasticin subfamily. In terms of tissue distribution, expressed by the skin glands.

Its subcellular location is the secreted. It localises to the target cell membrane. Neutral peptide with no antimicrobial activity. May act in synergy with cationic peptides by enhancing their activity. Has a moderate hemolytic activity. The polypeptide is Plasticin-C1 (Agalychnis callidryas (Red-eyed tree frog)).